The following is a 57-amino-acid chain: Potassium channel toxin alpha-KTx 8.5 (57 aa).

The signal sequence occupies residues 1–28 (MSRLYAIILIALVLNVIMTIMPDSKVEA). Disulfide bonds link Cys-31–Cys-47, Cys-34–Cys-52, and Cys-38–Cys-54.

The protein belongs to the short scorpion toxin superfamily. Potassium channel inhibitor family. Alpha-KTx 08 subfamily. As to expression, expressed by the venom gland.

Its subcellular location is the secreted. In terms of biological role, selectively inhibits voltage-gated potassium channels Kv1.2/KCNA2 (IC(50)=183 nM). This chain is Potassium channel toxin alpha-KTx 8.5, found in Odontobuthus doriae (Yellow Iranian scorpion).